We begin with the raw amino-acid sequence, 89 residues long: Small ribosomal subunit protein uS15 (89 aa).

It belongs to the universal ribosomal protein uS15 family. As to quaternary structure, part of the 30S ribosomal subunit. Forms a bridge to the 50S subunit in the 70S ribosome, contacting the 23S rRNA.

Its function is as follows. One of the primary rRNA binding proteins, it binds directly to 16S rRNA where it helps nucleate assembly of the platform of the 30S subunit by binding and bridging several RNA helices of the 16S rRNA. In terms of biological role, forms an intersubunit bridge (bridge B4) with the 23S rRNA of the 50S subunit in the ribosome. The polypeptide is Small ribosomal subunit protein uS15 (Mesorhizobium japonicum (strain LMG 29417 / CECT 9101 / MAFF 303099) (Mesorhizobium loti (strain MAFF 303099))).